The chain runs to 58 residues: Probable U-exon protein (58 aa).

The protein is Probable U-exon protein of Snake adenovirus serotype 1 (SnAdV-1).